Here is a 392-residue protein sequence, read N- to C-terminus: Phosphoglycerate kinase (392 aa).

Substrate is bound by residues 21 to 23, Arg36, 59 to 62, Arg114, and Arg147; these read DMN and HLGR. Residues Lys198, Glu320, and 346 to 349 each bind ATP; that span reads GGDT.

Belongs to the phosphoglycerate kinase family. As to quaternary structure, monomer.

It localises to the cytoplasm. It carries out the reaction (2R)-3-phosphoglycerate + ATP = (2R)-3-phospho-glyceroyl phosphate + ADP. The protein operates within carbohydrate degradation; glycolysis; pyruvate from D-glyceraldehyde 3-phosphate: step 2/5. The sequence is that of Phosphoglycerate kinase from Neisseria meningitidis serogroup C (strain 053442).